Here is a 392-residue protein sequence, read N- to C-terminus: 1-deoxy-D-xylulose 5-phosphate reductoisomerase (392 aa).

The NADPH site is built by Thr-10, Gly-11, Ser-12, Ile-13, Asn-38, and Asn-124. Lys-125 is a 1-deoxy-D-xylulose 5-phosphate binding site. An NADPH-binding site is contributed by Glu-126. Asp-150 contributes to the Mn(2+) binding site. 4 residues coordinate 1-deoxy-D-xylulose 5-phosphate: Ser-151, Glu-152, Ser-176, and His-199. Glu-152 lines the Mn(2+) pocket. Residue Gly-205 participates in NADPH binding. Ser-212, Asn-217, Lys-218, and Glu-221 together coordinate 1-deoxy-D-xylulose 5-phosphate. Position 221 (Glu-221) interacts with Mn(2+).

The protein belongs to the DXR family. Mg(2+) serves as cofactor. The cofactor is Mn(2+).

It carries out the reaction 2-C-methyl-D-erythritol 4-phosphate + NADP(+) = 1-deoxy-D-xylulose 5-phosphate + NADPH + H(+). The protein operates within isoprenoid biosynthesis; isopentenyl diphosphate biosynthesis via DXP pathway; isopentenyl diphosphate from 1-deoxy-D-xylulose 5-phosphate: step 1/6. Catalyzes the NADPH-dependent rearrangement and reduction of 1-deoxy-D-xylulose-5-phosphate (DXP) to 2-C-methyl-D-erythritol 4-phosphate (MEP). In Gloeobacter violaceus (strain ATCC 29082 / PCC 7421), this protein is 1-deoxy-D-xylulose 5-phosphate reductoisomerase.